Reading from the N-terminus, the 167-residue chain is SsrA-binding protein (167 aa).

The interval 139–167 (QAHDKRHAEKEREWQRDKQRIMRAHNRNA) is disordered. The span at 144 to 158 (RHAEKEREWQRDKQR) shows a compositional bias: basic and acidic residues.

This sequence belongs to the SmpB family.

It is found in the cytoplasm. Required for rescue of stalled ribosomes mediated by trans-translation. Binds to transfer-messenger RNA (tmRNA), required for stable association of tmRNA with ribosomes. tmRNA and SmpB together mimic tRNA shape, replacing the anticodon stem-loop with SmpB. tmRNA is encoded by the ssrA gene; the 2 termini fold to resemble tRNA(Ala) and it encodes a 'tag peptide', a short internal open reading frame. During trans-translation Ala-aminoacylated tmRNA acts like a tRNA, entering the A-site of stalled ribosomes, displacing the stalled mRNA. The ribosome then switches to translate the ORF on the tmRNA; the nascent peptide is terminated with the 'tag peptide' encoded by the tmRNA and targeted for degradation. The ribosome is freed to recommence translation, which seems to be the essential function of trans-translation. In Xylella fastidiosa (strain 9a5c), this protein is SsrA-binding protein.